The following is a 599-amino-acid chain: Elongation factor 4 (599 aa).

Positions 2-184 constitute a tr-type G domain; the sequence is KNIRNFSIIA…RLVRDIPPPE (183 aa). GTP-binding positions include 14-19 and 131-134; these read DHGKST and NKID.

This sequence belongs to the TRAFAC class translation factor GTPase superfamily. Classic translation factor GTPase family. LepA subfamily.

The protein resides in the cell inner membrane. The enzyme catalyses GTP + H2O = GDP + phosphate + H(+). Functionally, required for accurate and efficient protein synthesis under certain stress conditions. May act as a fidelity factor of the translation reaction, by catalyzing a one-codon backward translocation of tRNAs on improperly translocated ribosomes. Back-translocation proceeds from a post-translocation (POST) complex to a pre-translocation (PRE) complex, thus giving elongation factor G a second chance to translocate the tRNAs correctly. Binds to ribosomes in a GTP-dependent manner. The sequence is that of Elongation factor 4 from Klebsiella pneumoniae subsp. pneumoniae (strain ATCC 700721 / MGH 78578).